We begin with the raw amino-acid sequence, 398 residues long: Bifunctional enzyme IspD/IspF (398 aa).

The 2-C-methyl-D-erythritol 4-phosphate cytidylyltransferase stretch occupies residues 1–234 (MANSRRTAAI…SRLAALLGDI (234 aa)). The tract at residues 235–398 (RTGTGYDVHA…LPWGPNGLSG (164 aa)) is 2-C-methyl-D-erythritol 2,4-cyclodiphosphate synthase. Residues Asp-241 and His-243 each coordinate a divalent metal cation. Residues 241 to 243 (DVH) and 267 to 268 (HS) contribute to the 4-CDP-2-C-methyl-D-erythritol 2-phosphate site. A divalent metal cation is bound at residue His-275. Residues 289 to 291 (DIG), 365 to 368 (TTSE), Phe-372, and Arg-375 contribute to the 4-CDP-2-C-methyl-D-erythritol 2-phosphate site.

It in the N-terminal section; belongs to the IspD/TarI cytidylyltransferase family. IspD subfamily. The protein in the C-terminal section; belongs to the IspF family. It depends on a divalent metal cation as a cofactor.

It catalyses the reaction 2-C-methyl-D-erythritol 4-phosphate + CTP + H(+) = 4-CDP-2-C-methyl-D-erythritol + diphosphate. The enzyme catalyses 4-CDP-2-C-methyl-D-erythritol 2-phosphate = 2-C-methyl-D-erythritol 2,4-cyclic diphosphate + CMP. It functions in the pathway isoprenoid biosynthesis; isopentenyl diphosphate biosynthesis via DXP pathway; isopentenyl diphosphate from 1-deoxy-D-xylulose 5-phosphate: step 2/6. Its pathway is isoprenoid biosynthesis; isopentenyl diphosphate biosynthesis via DXP pathway; isopentenyl diphosphate from 1-deoxy-D-xylulose 5-phosphate: step 4/6. In terms of biological role, bifunctional enzyme that catalyzes the formation of 4-diphosphocytidyl-2-C-methyl-D-erythritol from CTP and 2-C-methyl-D-erythritol 4-phosphate (MEP) (IspD), and catalyzes the conversion of 4-diphosphocytidyl-2-C-methyl-D-erythritol 2-phosphate (CDP-ME2P) to 2-C-methyl-D-erythritol 2,4-cyclodiphosphate (ME-CPP) with a corresponding release of cytidine 5-monophosphate (CMP) (IspF). The protein is Bifunctional enzyme IspD/IspF of Rhodopseudomonas palustris (strain BisA53).